Reading from the N-terminus, the 89-residue chain is Ixosin-B (89 aa).

An N-terminal signal peptide occupies residues 1 to 26 (MASGWTHRLLLLAAVVTLGATPIAAA). A propeptide spanning residues 27 to 57 (SMEYLVTAPGYLTPNADIKITAVVTNPSSAG) is cleaved from the precursor. A disordered region spans residues 68–89 (SGIQPEQHSSGKSDVRRWRSRY). Basic and acidic residues predominate over residues 76-89 (SSGKSDVRRWRSRY).

In terms of biological role, has antifungal activity against C.albicans. Has antibacterial activity against the Gram-positive bacterium S.aureus and the Gram-negative bacterium E.coli. Lacks hemolytic activity against rabbit erythrocytes. This chain is Ixosin-B, found in Ixodes sinensis (Hard tick).